We begin with the raw amino-acid sequence, 461 residues long: Lysosomal proton-coupled steroid conjugate and bile acid symporter SLC46A3 (461 aa).

The N-terminal stretch at 1 to 25 is a signal peptide; sequence MKISFIEPAILLYAFAMTLTIPLTA. The Extracellular segment spans residues 26-70; that stretch reads QYVYRRIWEETGNYTFTSSSNVSECEQNKSSSTFAFQEEVQKKAS. N-linked (GlcNAc...) asparagine glycosylation is found at Asn-38, Asn-46, and Asn-53. The chain crosses the membrane as a helical span at residues 71–91; sequence LFSLQVEISGLIPGLVSTFML. Topologically, residues 92–103 are cytoplasmic; the sequence is LSSSDNHGRKLP. Residues 104–124 traverse the membrane as a helical segment; sequence MVLSSLGSLGTNLWLCAMSYF. At 125–135 the chain is on the extracellular side; it reads DLPLQLLVAST. The chain crosses the membrane as a helical span at residues 136–156; the sequence is FIGALFGNYTTFWGACFAYIV. The Cytoplasmic segment spans residues 157-170; it reads DQEKEYKHRIIRIA. Residues 171–191 form a helical membrane-spanning segment; it reads VLDFMLGVVTGLTGLSSGYFI. The Extracellular portion of the chain corresponds to 192-197; it reads RELGFA. Residues 198–218 form a helical membrane-spanning segment; it reads WSYFIIAVVVLVNLAYILFFL. At 219-260 the chain is on the cytoplasmic side; the sequence is SDPIKESSSQIVTMSCSESLKDLFYRTYMLFKNGSCKRRSLL. Residues 261–281 form a helical membrane-spanning segment; the sequence is CLLIFTLVVYFFVVFGITPVF. Residues 282–301 lie on the Extracellular side of the membrane; sequence TLYELGPPLCWNEVYIGYGS. The helical transmembrane segment at 302 to 322 threads the bilayer; it reads ALGSLSFLSSFLGIWLFSYCL. At 323–324 the chain is on the cytoplasmic side; that stretch reads KD. Residues 325–345 traverse the membrane as a helical segment; that stretch reads IHIAYVGIFTTMVGMMLTAFT. Residues 346–347 are Extracellular-facing; that stretch reads RT. Residues 348–368 traverse the membrane as a helical segment; the sequence is TLMMFLVRISFFFTIMPLSIL. Residues 369–381 lie on the Cytoplasmic side of the membrane; the sequence is RSMLSKVVHSTEQ. The chain crosses the membrane as a helical span at residues 382–402; that stretch reads GVLFACIAFLETLGGVTSTSA. At 403–415 the chain is on the extracellular side; it reads YNGIYSATVAWYP. A helical transmembrane segment spans residues 416–436; it reads GFVFLLSAGLLVLPAVSLCMV. Residues 437-461 are Cytoplasmic-facing; it reads KCIGWEEGSYTLLIHDEPSEHTSDS. Residues 446–449 carry the Tyrosine-based lysosomal-sorting motif motif; that stretch reads YTLL.

It belongs to the major facilitator superfamily. SLC46A family.

The protein localises to the lysosome membrane. It carries out the reaction estrone 3-sulfate(out) + n H(+)(out) = estrone 3-sulfate(in) + n H(+)(in). It catalyses the reaction 25-hydroxyvitamin D3 sulfate(out) + n H(+)(out) = 25-hydroxyvitamin D3 sulfate(in) + n H(+)(in). The catalysed reaction is cholate(out) + n H(+)(out) = cholate(in) + n H(+)(in). The enzyme catalyses glycocholate(out) + n H(+)(out) = glycocholate(in) + n H(+)(in). It carries out the reaction taurocholate(out) + n H(+)(out) = taurocholate(in) + n H(+)(in). It catalyses the reaction dehydroepiandrosterone 3-sulfate(out) + n H(+)(out) = dehydroepiandrosterone 3-sulfate(in) + n H(+)(in). The catalysed reaction is N-acetyl-D-muramoyl-L-alanyl-D-isoglutamine(out) + n H(+)(out) = N-acetyl-D-muramoyl-L-alanyl-D-isoglutamine(in) + n H(+)(in). The enzyme catalyses 2',3'-cGAMP(out) + n H(+)(out) = 2',3'-cGAMP(in) + n H(+)(in). Functionally, lysosomal proton-coupled steroid conjugate and bile acid transporter. Preferentially recognizes lipophilic steroid conjugates or bile acis as endogenous substrates and seems to mediate escape from lysosomes to the cytoplasm. Modulates hepatic cytosolic copper homeostasis, maybe acting as a lysosomal copper transporter and sequestering copper ions in the lysosome. Delivers pathogen-associated molecular patterns to cytosolic pattern recognition receptors as part of the innate immune response to microbes. Selectively transports bacterial muramyl dipeptide (MDP) into the cytosol for recognition by NOD2, triggering inflammatory responses. Likely acts as a redundant importer of cyclic GMP-AMP dinucleotides (cGAMPs) in monocyte and macrophage cell lineages. The transport mechanism, its electrogenicity and stoichiometry remain to be elucidated. The protein is Lysosomal proton-coupled steroid conjugate and bile acid symporter SLC46A3 (Slc46a3) of Rattus norvegicus (Rat).